A 351-amino-acid chain; its full sequence is MGKLQDGIAIKRINDAITTFKNYKLGELEQGGSMAINTLSNVRAHVGLAWPAILRNCLIHTSSHLGFMKFMIDIATTWKVGAFTLLGSVGDEDPFTDVDLIYTKTCLHLGLKDNDFLQFPEEFAYEANSFLEAQSMNARVDMLTGVHNIEDKYVFRIESISKFLKAYYTASEDVAYLTGFIKPDGSKESILSAELLKAQVTSEVLRVRNLITTKIQQYINLYEDSQLPHFRRAALSYTQDWDVDGGVPAALPQPDTTDDESPVTKPGASAPTVSKGADQPEDEEIIHKKVDASKDAPPKAVSSGNVSARGIPAFLEDDMSEMDAPDGFHDYLTREHENNFDLAQLGLAPSV.

Disordered stretches follow at residues 245–281 and 288–307; these read GGVP…DQPE and KKVD…GNVS. The segment covering 288-297 has biased composition (basic and acidic residues); sequence KKVDASKDAP.

The protein belongs to the phytoreovirus minor outer capsid protein P9 family.

The protein resides in the virion. The protein localises to the host cytoplasm. Functionally, minor outer capsid protein. This is Minor outer capsid protein P9 from Rice dwarf virus (RDV).